The primary structure comprises 507 residues: Inactive alanine aminotransferase (507 aa).

Pyridoxal 5'-phosphate is bound by residues alanine 173, serine 174, tyrosine 199, asparagine 255, and serine 324. Lysine 327 is modified (N6-(pyridoxal phosphate)lysine). Arginine 336 is a binding site for pyridoxal 5'-phosphate.

The protein belongs to the class-I pyridoxal-phosphate-dependent aminotransferase family. Alanine aminotransferase subfamily. As to quaternary structure, homodimer. The cofactor is pyridoxal 5'-phosphate.

Its subcellular location is the cytoplasm. It is found in the nucleus. Inactive alanine aminotransferase. Forms a catalytically active Schiff base with PLP, but lacks alanine transaminase activity, probably due to an altered structural conformation of the dimeric enzyme. This suggests this protein may have a yet undiscovered physiological function. This Saccharomyces cerevisiae (strain ATCC 204508 / S288c) (Baker's yeast) protein is Inactive alanine aminotransferase (ALT2).